Here is a 758-residue protein sequence, read N- to C-terminus: MFEIIKKSIDWEGRTLSLETGKIARQADGSVVVNYGDTSILVTVVRKKKEESVDFLPLNVQFIAKSYAMGKIPGGFFKREGKPSDRETLISRVIDRSIRPLFPEGFHDEISVVCNLLTYDTVNSPEVPALIGTVAALAISGVPFHFTIAGVMVGCDENNNYILNPSVQEMKASNLDLFLSGDENSILMVESEVKELSEENVLNAIKFGHEHLQPVIKLIKEFADTVGNKPESFAPVDISDITQELEKYRKDFEEAYSKTVKQERVQALEVVRNNILNTLKEAGKDEKLITYAVKSFERSLVREMIRRKSVRIDSRKYDEIRQIEIEADILPKTHGSALFTRGSTQALVVTALGTTQDEQIVDDIEGDRREHFMLHYNFPPFAVGEASAIRAPGRREIGHGKLAWKAIHPVLPDKSEFPYTIRVVSEIMESDGSSSMATVCGTSIALMDTGVPIKAPVAGIAMGLIKDKNEHIILSDILGDEDYLGDMDFKVAGTSEGITALQMDMKIPGISFEIVEKSLEQAKVGRLHILEKMNAVISEHRKDIKDHVPRVLSFYIDKDKISAAIGTKGKNIRSVCERSNAKIEIGDDGKVSVFAISSTEAEAAKNMMIDSITELEQGSIIDAKVVKIEKSIVELELLNGRKGKMHISEVANQHVESIEDILKQGDTFKALIIDFEKGGCPKLSRRRVDQETGEFFEGKLYNEERRDGLNNRDNYYNNSFNKKPEDNYHSNRPTRPRSGFSNRSRPKFGNNDSSSGFY.

Mg(2+) is bound by residues aspartate 482 and aspartate 488. The 60-residue stretch at 549-608 folds into the KH domain; the sequence is PRVLSFYIDKDKISAAIGTKGKNIRSVCERSNAKIEIGDDGKVSVFAISSTEAEAAKNMM. Positions 618 to 686 constitute an S1 motif domain; it reads GSIIDAKVVK…KGGCPKLSRR (69 aa). Residues 707–758 are disordered; it reads DGLNNRDNYYNNSFNKKPEDNYHSNRPTRPRSGFSNRSRPKFGNNDSSSGFY. A compositionally biased stretch (low complexity) spans 711–721; the sequence is NRDNYYNNSFN.

Belongs to the polyribonucleotide nucleotidyltransferase family. Mg(2+) serves as cofactor.

The protein localises to the cytoplasm. It catalyses the reaction RNA(n+1) + phosphate = RNA(n) + a ribonucleoside 5'-diphosphate. Involved in mRNA degradation. Catalyzes the phosphorolysis of single-stranded polyribonucleotides processively in the 3'- to 5'-direction. The chain is Polyribonucleotide nucleotidyltransferase from Wolbachia pipientis subsp. Culex pipiens (strain wPip).